Consider the following 371-residue polypeptide: Cytochrome b (371 aa).

Helical transmembrane passes span 25 to 45 (FGSM…FLAV), 69 to 90 (WMMQ…YIHI), 105 to 125 (WMSG…GYIL), and 170 to 190 (FFAL…LHIL). Heme b is bound by residues H75 and H89. H174 and H188 together coordinate heme b. H193 provides a ligand contact to a ubiquinone. The next 4 membrane-spanning stretches (helical) occupy residues 218–238 (YKDL…TFFL), 280–300 (LGGA…PFTH), 312–332 (MSQL…WAAT), and 339–358 (FMMI…ISNP).

It belongs to the cytochrome b family. As to quaternary structure, the cytochrome bc1 complex contains 3 respiratory subunits (MT-CYB, CYC1 and UQCRFS1), 2 core proteins (UQCRC1 and UQCRC2) and probably 6 low-molecular weight proteins. Heme b is required as a cofactor.

It localises to the mitochondrion inner membrane. Component of the ubiquinol-cytochrome c reductase complex (complex III or cytochrome b-c1 complex) that is part of the mitochondrial respiratory chain. The b-c1 complex mediates electron transfer from ubiquinol to cytochrome c. Contributes to the generation of a proton gradient across the mitochondrial membrane that is then used for ATP synthesis. In Casarea dussumieri (Round Island keel-scaled boa), this protein is Cytochrome b (MT-CYB).